A 394-amino-acid polypeptide reads, in one-letter code: Purine ribonucleoside efflux pump NepI (394 aa).

The Cytoplasmic segment spans residues methionine 1–alanine 21. A helical membrane pass occupies residues valine 22 to leucine 42. Over leucine 43 to glutamate 54 the chain is Periplasmic. Residues glycine 55–isoleucine 75 form a helical membrane-spanning segment. Topologically, residues threonine 76–arginine 85 are cytoplasmic. Residues tyrosine 86–asparagine 106 traverse the membrane as a helical segment. A topological domain (periplasmic) is located at residue serine 107. A helical membrane pass occupies residues phenylalanine 108–methionine 128. The Cytoplasmic segment spans residues serine 129–serine 147. The chain crosses the membrane as a helical span at residues valine 148–glycine 168. Over glutamate 169 to asparagine 175 the chain is Periplasmic. A helical membrane pass occupies residues valine 176–proline 196. Topologically, residues serine 197 to arginine 215 are cytoplasmic. The chain crosses the membrane as a helical span at residues proline 216–phenylalanine 236. Over threonine 237 to threonine 255 the chain is Periplasmic. The helical transmembrane segment at leucine 256–leucine 276 threads the bilayer. Topologically, residues lysine 277 to lysine 281 are cytoplasmic. The chain crosses the membrane as a helical span at residues leucine 282–glycine 302. Residues serine 303 to lysine 305 lie on the Periplasmic side of the membrane. Residues isoleucine 306 to tryptophan 326 traverse the membrane as a helical segment. Over serine 327–serine 343 the chain is Cytoplasmic. A helical membrane pass occupies residues isoleucine 344 to leucine 364. Residues aspartate 365–asparagine 366 are Periplasmic-facing. A helical membrane pass occupies residues isoleucine 367–valine 387. The Cytoplasmic portion of the chain corresponds to threonine 388 to lysine 394.

It belongs to the major facilitator superfamily. DHA1 family. NepI (TC 2.A.1.2.26) subfamily.

The protein localises to the cell inner membrane. The catalysed reaction is inosine(in) + H(+)(out) = inosine(out) + H(+)(in). It carries out the reaction guanosine(in) + H(+)(out) = guanosine(out) + H(+)(in). Involved in the efflux of purine ribonucleosides, such as inosine and guanosine. This Shigella dysenteriae serotype 1 (strain Sd197) protein is Purine ribonucleoside efflux pump NepI.